A 300-amino-acid chain; its full sequence is NAD kinase (300 aa).

Catalysis depends on D75, which acts as the Proton acceptor. Residues 75–76, 149–150, R177, D179, 190–195, A214, and Q248 each bind NAD(+); these read DG, ND, and TAYALS.

The protein belongs to the NAD kinase family. Requires a divalent metal cation as cofactor.

Its subcellular location is the cytoplasm. The catalysed reaction is NAD(+) + ATP = ADP + NADP(+) + H(+). In terms of biological role, involved in the regulation of the intracellular balance of NAD and NADP, and is a key enzyme in the biosynthesis of NADP. Catalyzes specifically the phosphorylation on 2'-hydroxyl of the adenosine moiety of NAD to yield NADP. The protein is NAD kinase of Paraburkholderia phymatum (strain DSM 17167 / CIP 108236 / LMG 21445 / STM815) (Burkholderia phymatum).